The chain runs to 229 residues: Cytidylate kinase (229 aa).

Gly-12–Thr-20 serves as a coordination point for ATP.

The protein belongs to the cytidylate kinase family. Type 1 subfamily.

The protein resides in the cytoplasm. It carries out the reaction CMP + ATP = CDP + ADP. The catalysed reaction is dCMP + ATP = dCDP + ADP. The chain is Cytidylate kinase from Pseudomonas paraeruginosa (strain DSM 24068 / PA7) (Pseudomonas aeruginosa (strain PA7)).